The chain runs to 517 residues: Perilipin-1 (517 aa).

Ser81 is modified (phosphoserine). Thr85 is modified (phosphothreonine). Phosphoserine occurs at positions 126, 130, 132, 137, and 174. The interval 195-216 (DKESAPSSGRQRTQKAPKAKPS) is disordered. Phosphothreonine occurs at positions 223, 298, and 300. The interval 286 to 320 (LAASQDESHDDQTDTEGEETDDEEEEEESEAEENV) is disordered. Positions 290–321 (QDESHDDQTDTEGEETDDEEEEEESEAEENVL) are required for interaction with CIDEC. A compositionally biased stretch (acidic residues) spans 298–318 (TDTEGEETDDEEEEEESEAEE). Phosphoserine occurs at positions 314, 384, 386, 410, 433, 439, 460, 492, and 494. Positions 425–490 (SAEAERKGSG…AMPREKPARR (66 aa)) are disordered.

Belongs to the perilipin family. Interacts with ABHD5. Interacts with CIDEC. Interacts with AQP7. In terms of processing, major cAMP-dependent protein kinase-substrate in adipocytes, also dephosphorylated by PP1. When phosphorylated, may be maximally sensitive to HSL and when unphosphorylated, may play a role in the inhibition of lipolysis, by acting as a barrier in lipid droplet.

Its subcellular location is the endoplasmic reticulum. The protein resides in the lipid droplet. In terms of biological role, modulator of adipocyte lipid metabolism. Coats lipid storage droplets to protect them from breakdown by hormone-sensitive lipase (HSL). Its absence may result in leanness. Plays a role in unilocular lipid droplet formation by activating CIDEC. Their interaction promotes lipid droplet enlargement and directional net neutral lipid transfer. May modulate lipolysis and triglyceride levels. The protein is Perilipin-1 (Plin1) of Mus musculus (Mouse).